Here is a 420-residue protein sequence, read N- to C-terminus: Sulfate adenylyltransferase (420 aa).

Ala-2 bears the N-acetylalanine mark.

Belongs to the sulfate adenylyltransferase family. Requires Mg(2+) as cofactor.

The enzyme catalyses sulfate + ATP + H(+) = adenosine 5'-phosphosulfate + diphosphate. It participates in sulfur metabolism; hydrogen sulfide biosynthesis; sulfite from sulfate: step 1/3. With respect to regulation, inhibited by adenosine 5'-phosphosulfate (APS), but not by 3'phosphoadenosine 5'-phosphosulfate (PAPS). Inhibited by AMP, ADP, CTP, GTP, ITP, UTP and anions other than those in group IV. The polypeptide is Sulfate adenylyltransferase (Pyropia yezoensis (Susabi-nori)).